Here is a 423-residue protein sequence, read N- to C-terminus: Histidine--tRNA ligase (423 aa).

It belongs to the class-II aminoacyl-tRNA synthetase family. Homodimer.

Its subcellular location is the cytoplasm. The enzyme catalyses tRNA(His) + L-histidine + ATP = L-histidyl-tRNA(His) + AMP + diphosphate + H(+). In Prochlorococcus marinus (strain MIT 9211), this protein is Histidine--tRNA ligase.